Reading from the N-terminus, the 229-residue chain is Peptidyl-tRNA hydrolase (229 aa).

Residue Y17 coordinates tRNA. H22 acts as the Proton acceptor in catalysis. The tRNA site is built by F74, N76, and N122. The tract at residues A194–T229 is disordered. The span at T207–P223 shows a compositional bias: low complexity.

This sequence belongs to the PTH family. As to quaternary structure, monomer.

The protein resides in the cytoplasm. It catalyses the reaction an N-acyl-L-alpha-aminoacyl-tRNA + H2O = an N-acyl-L-amino acid + a tRNA + H(+). In terms of biological role, hydrolyzes ribosome-free peptidyl-tRNAs (with 1 or more amino acids incorporated), which drop off the ribosome during protein synthesis, or as a result of ribosome stalling. Catalyzes the release of premature peptidyl moieties from peptidyl-tRNA molecules trapped in stalled 50S ribosomal subunits, and thus maintains levels of free tRNAs and 50S ribosomes. This Desulfovibrio desulfuricans (strain ATCC 27774 / DSM 6949 / MB) protein is Peptidyl-tRNA hydrolase.